The following is an 853-amino-acid chain: Lysine-specific histone demethylase 1A (853 aa).

The tract at residues 1–177 (MLSGKKAAAA…EPEEPSGVEG (177 aa)) is disordered. Over residues 7–26 (AAAAAAAAAAAAAAGTEAGS) the composition is skewed to low complexity. Residue Thr60 is modified to Phosphothreonine. Positions 76-97 (AEPPGSAGPQAGPTAGPGSATP) are enriched in low complexity. Thr105 is subject to Phosphothreonine. Positions 111–152 (TSRRKRAKVEYREMDESLANLSEDEYYSEEERNAKAEKEKKL) form a coiled coil. Phosphoserine is present on residues Ser127 and Ser132. A Phosphotyrosine modification is found at Tyr136. Residue Ser138 is modified to Phosphoserine. A compositionally biased stretch (basic and acidic residues) spans 139-152 (EEERNAKAEKEKKL). Residues 161-173 (PEEENESEPEEPS) show a composition bias toward acidic residues. Ser167 carries the post-translational modification Phosphoserine. In terms of domain architecture, SWIRM spans 175–274 (VEGAAFQSRL…FGIYKRIKPL (100 aa)). FAD contacts are provided by residues Ser290, Glu309, Arg311, Arg317, and 333 to 334 (MV). The interval 301 to 853 (FGMDVTLLEA…GVPAQQSPSM (553 aa)) is demethylase activity. A coiled-coil region spans residues 429–515 (IEHWKKIVKT…EEKLQELEAN (87 aa)). Lys433, Lys434, and Lys437 each carry N6-acetyllysine. Residues Lys443 and Lys470 each participate in a glycyl lysine isopeptide (Lys-Gly) (interchain with G-Cter in SUMO2) cross-link. Lys504 participates in a covalent cross-link: Glycyl lysine isopeptide (Lys-Gly) (interchain with G-Cter in ubiquitin). Ser612 is subject to Phosphoserine. FAD is bound by residues Glu802 and 811 to 812 (TV). Position 850 is a phosphoserine (Ser850).

It belongs to the flavin monoamine oxidase family. Component of a histone demethylase complex with RCOR1. Component of a BHC histone deacetylase complex that contains HDAC1, HDAC2, HMG20B, KDM1A, RCOR1 and PHF21A. The BHC complex may also contain ZMYM2, ZNF217, ZMYM3, GSE1 and GTF2I. In the complex, RCOR1 strongly enhances the demethylase activity and protects it from the proteasome while PHF21A inhibits the demethylase activity. Interacts with the androgen receptor (AR). Component of a RCOR/GFI/KDM1A/HDAC complex. Interacts directly with GFI1 and GFI1B. Interacts with SNAI1 (via SNAG domain). Interacts with INSM1. Interacts (via AOD/Tower domain) with JADE2 (via C-terminus). Interacts with ESRRB; co-occupes the core set of ESRRB targets. Interacts with SAMD1 (via WH domain); the interaction modulates KDM1A function. Interacts with RBPJ. Interacts with L3MBTL3. Interacts with ZMYND8. The cofactor is FAD. In terms of processing, acetylated by KAT8 in epithelial but not in mesenchymal cells, thereby regulating the epithelial-to-mesenchymal transition. Acetylation by KAT8 reduces KDM1A association with nucleosomes, thereby decreasing histone H3 demethylation, leading to transcription activatio of target genes. Post-translationally, polyubiquitinated by JADE2; which leads to its proteasomal degradation. Deubiquitinated by USP38; preventing it from degradation by the 26S proteasome. In terms of tissue distribution, ubiquitously expressed.

It localises to the nucleus. The protein resides in the chromosome. It catalyses the reaction N(6),N(6)-dimethyl-L-lysyl(4)-[histone H3] + 2 A + 2 H2O = L-lysyl(4)-[histone H3] + 2 formaldehyde + 2 AH2. The N-terminal sequences of INSM1 and SNAI1 compete with histone H3 for the same binding site and thereby inhibit histone demethylation (in vitro). Its function is as follows. Histone demethylase that can demethylate both 'Lys-4' (H3K4me) and 'Lys-9' (H3K9me) of histone H3, thereby acting as a coactivator or a corepressor, depending on the context. Acts by oxidizing the substrate by FAD to generate the corresponding imine that is subsequently hydrolyzed. Acts as a corepressor by mediating demethylation of H3K4me, a specific tag for epigenetic transcriptional activation. Demethylates both mono- (H3K4me1) and di-methylated (H3K4me2) H3K4me. May play a role in the repression of neuronal genes. Alone, it is unable to demethylate H3K4me on nucleosomes and requires the presence of RCOR1/CoREST to achieve such activity. Also acts as a coactivator of androgen receptor (ANDR)-dependent transcription, by being recruited to ANDR target genes and mediating demethylation of H3K9me, a specific tag for epigenetic transcriptional repression. The presence of PRKCB in ANDR-containing complexes, which mediates phosphorylation of 'Thr-6' of histone H3 (H3T6ph), a specific tag that prevents demethylation H3K4me, prevents H3K4me demethylase activity of KDM1A. Demethylates di-methylated 'Lys-370' of p53/TP53 which prevents interaction of p53/TP53 with TP53BP1 and represses p53/TP53-mediated transcriptional activation. Demethylates and stabilizes the DNA methylase DNMT1. Demethylates methylated 'Lys-44' and methylated 'Lys-119' of SOX2. Required for gastrulation during embryogenesis. Component of a RCOR/GFI/KDM1A/HDAC complex that suppresses, via histone deacetylase (HDAC) recruitment, a number of genes implicated in multilineage blood cell development. Facilitates epithelial-to-mesenchymal transition by acting as an effector of SNAI1-mediated transcription repression of epithelial markers E-cadherin/CDH1, CDN7 and KRT8. Required for the maintenance of the silenced state of the SNAI1 target genes E-cadherin/CDH1 and CDN7. Required for the repression of GIPR expression. This Mus musculus (Mouse) protein is Lysine-specific histone demethylase 1A.